Here is a 194-residue protein sequence, read N- to C-terminus: FMN-dependent NADH:quinone oxidoreductase (194 aa).

Residues S10 and 90–93 each bind FMN; that span reads MYNL.

It belongs to the azoreductase type 1 family. As to quaternary structure, homodimer. Requires FMN as cofactor.

The enzyme catalyses 2 a quinone + NADH + H(+) = 2 a 1,4-benzosemiquinone + NAD(+). It carries out the reaction N,N-dimethyl-1,4-phenylenediamine + anthranilate + 2 NAD(+) = 2-(4-dimethylaminophenyl)diazenylbenzoate + 2 NADH + 2 H(+). In terms of biological role, quinone reductase that provides resistance to thiol-specific stress caused by electrophilic quinones. Also exhibits azoreductase activity. Catalyzes the reductive cleavage of the azo bond in aromatic azo compounds to the corresponding amines. The protein is FMN-dependent NADH:quinone oxidoreductase of Haemophilus influenzae (strain 86-028NP).